Reading from the N-terminus, the 93-residue chain is UPF0250 protein PSPA7_1111 (93 aa).

The protein belongs to the UPF0250 family.

In Pseudomonas paraeruginosa (strain DSM 24068 / PA7) (Pseudomonas aeruginosa (strain PA7)), this protein is UPF0250 protein PSPA7_1111.